We begin with the raw amino-acid sequence, 345 residues long: Dihydroorotate dehydrogenase (quinone) (345 aa).

Residues 65–69 (AGLDK) and Thr-89 each bind FMN. Residue Lys-69 participates in substrate binding. Residue 114–118 (NRMGF) coordinates substrate. The FMN site is built by Asn-142 and Asn-175. Asn-175 is a binding site for substrate. Ser-178 serves as the catalytic Nucleophile. Asn-180 is a binding site for substrate. Residues Lys-220 and Thr-248 each coordinate FMN. A substrate-binding site is contributed by 249 to 250 (NT). FMN-binding positions include Gly-271, Gly-300, and 321-322 (YT).

Belongs to the dihydroorotate dehydrogenase family. Type 2 subfamily. Monomer. It depends on FMN as a cofactor.

It localises to the cell membrane. The catalysed reaction is (S)-dihydroorotate + a quinone = orotate + a quinol. The protein operates within pyrimidine metabolism; UMP biosynthesis via de novo pathway; orotate from (S)-dihydroorotate (quinone route): step 1/1. Functionally, catalyzes the conversion of dihydroorotate to orotate with quinone as electron acceptor. This is Dihydroorotate dehydrogenase (quinone) from Burkholderia cenocepacia (strain HI2424).